A 592-amino-acid chain; its full sequence is Condensin-2 complex subunit H2 (592 aa).

2 disordered regions span residues 89–116 (NKKR…DGCE) and 261–285 (EAPS…PKQL). Residues 96–108 (GSSSDGNQEQAPS) show a composition bias toward polar residues.

The protein belongs to the CND2 H2 (condensin-2 subunit 2) family. In terms of assembly, component of the condensin-2 complex, which contains the smc2 and smc4 heterodimer, and three non SMC subunits, ncapg2, ncaph2 and ncapd3 that probably regulate the complex.

The protein localises to the nucleus. In terms of biological role, regulatory subunit of the condensin-2 complex, a complex that seems to provide chromosomes with an additional level of organization and rigidity and in establishing mitotic chromosome architecture. This Danio rerio (Zebrafish) protein is Condensin-2 complex subunit H2 (ncaph2).